A 422-amino-acid polypeptide reads, in one-letter code: 4-hydroxy-3-methylbut-2-en-1-yl diphosphate synthase (flavodoxin) (422 aa).

C316, C319, C362, and E369 together coordinate [4Fe-4S] cluster.

This sequence belongs to the IspG family. It depends on [4Fe-4S] cluster as a cofactor.

It catalyses the reaction (2E)-4-hydroxy-3-methylbut-2-enyl diphosphate + oxidized [flavodoxin] + H2O + 2 H(+) = 2-C-methyl-D-erythritol 2,4-cyclic diphosphate + reduced [flavodoxin]. It participates in isoprenoid biosynthesis; isopentenyl diphosphate biosynthesis via DXP pathway; isopentenyl diphosphate from 1-deoxy-D-xylulose 5-phosphate: step 5/6. Its function is as follows. Converts 2C-methyl-D-erythritol 2,4-cyclodiphosphate (ME-2,4cPP) into 1-hydroxy-2-methyl-2-(E)-butenyl 4-diphosphate. The sequence is that of 4-hydroxy-3-methylbut-2-en-1-yl diphosphate synthase (flavodoxin) from Ehrlichia canis (strain Jake).